The chain runs to 81 residues: Photosystem I iron-sulfur center (81 aa).

4Fe-4S ferredoxin-type domains follow at residues 2–31 (SHSV…MVPW) and 37–68 (GQIA…VRVY). [4Fe-4S] cluster-binding residues include Cys11, Cys14, Cys17, Cys21, Cys48, Cys51, Cys54, and Cys58.

As to quaternary structure, the cyanobacterial PSI reaction center is composed of one copy each of PsaA,B,C,D,E,F,I,J,K,L,M and X, and forms trimeric complexes. Requires [4Fe-4S] cluster as cofactor.

Its subcellular location is the cellular thylakoid membrane. It catalyses the reaction reduced [plastocyanin] + hnu + oxidized [2Fe-2S]-[ferredoxin] = oxidized [plastocyanin] + reduced [2Fe-2S]-[ferredoxin]. Apoprotein for the two 4Fe-4S centers FA and FB of photosystem I (PSI); essential for photochemical activity. FB is the terminal electron acceptor of PSI, donating electrons to ferredoxin. The C-terminus interacts with PsaA/B/D and helps assemble the protein into the PSI complex. Required for binding of PsaD and PsaE to PSI. PSI is a plastocyanin/cytochrome c6-ferredoxin oxidoreductase, converting photonic excitation into a charge separation, which transfers an electron from the donor P700 chlorophyll pair to the spectroscopically characterized acceptors A0, A1, FX, FA and FB in turn. The protein is Photosystem I iron-sulfur center of Trichodesmium erythraeum (strain IMS101).